Consider the following 682-residue polypeptide: Methionine--tRNA ligase (682 aa).

The short motif at 15–25 (PYANGAIHLGH) is the 'HIGH' region element. The Zn(2+) site is built by C146, C149, C159, and C162. A 'KMSKS' region motif is present at residues 331 to 335 (KMSKS). K334 serves as a coordination point for ATP. One can recognise a tRNA-binding domain in the interval 580-682 (DFAKLDLRVA…QGVKPGMQVK (103 aa)).

Belongs to the class-I aminoacyl-tRNA synthetase family. MetG type 1 subfamily. In terms of assembly, homodimer. The cofactor is Zn(2+).

The protein resides in the cytoplasm. It catalyses the reaction tRNA(Met) + L-methionine + ATP = L-methionyl-tRNA(Met) + AMP + diphosphate. Is required not only for elongation of protein synthesis but also for the initiation of all mRNA translation through initiator tRNA(fMet) aminoacylation. This is Methionine--tRNA ligase from Pasteurella multocida (strain Pm70).